Reading from the N-terminus, the 213-residue chain is Phosphatidylcholine transfer protein (213 aa).

At methionine 1 the chain carries N-acetylmethionine. Positions 1-212 (MDPGAGAFSE…MVKACQNYKK (212 aa)) constitute an START domain. A 1,2-diacyl-sn-glycero-3-phosphocholine is bound by residues tyrosine 72 and arginine 78. A Phosphoserine modification is found at serine 139. Position 157 (glutamine 157) interacts with a 1,2-diacyl-sn-glycero-3-phosphocholine. The segment at 171–176 (VFMYYF) is part of the binding site for phosphatidylcholine.

Interacts with ACOT13/THEM2.

The protein resides in the cytoplasm. Functionally, catalyzes the transfer of phosphatidylcholine between membranes. Binds phosphatidylcholine in a tight 1:1 stoichiometric complex. This Bos taurus (Bovine) protein is Phosphatidylcholine transfer protein (PCTP).